A 139-amino-acid chain; its full sequence is Plastocyanin (139 aa).

Positions 1–34 are cleaved as a signal peptide; sequence MKLIAASLRRLSLAVLTVLLVVSSFAVFTPSAAA. The 101-residue stretch at 35–135 folds into the Plastocyanin-like domain; it reads ETYTVKLGSD…HRGAGMVGKI (101 aa). Residues H73, C123, H126, and M131 each coordinate Cu cation.

The protein belongs to the plastocyanin family. Requires Cu(2+) as cofactor.

It is found in the cellular thylakoid membrane. In terms of biological role, participates in electron transfer between P700 and the cytochrome b6-f complex in photosystem I. In Trichormus variabilis (strain ATCC 29413 / PCC 7937) (Anabaena variabilis), this protein is Plastocyanin (petE).